The chain runs to 61 residues: Large ribosomal subunit protein uL30 (61 aa).

The protein belongs to the universal ribosomal protein uL30 family. In terms of assembly, part of the 50S ribosomal subunit.

The sequence is that of Large ribosomal subunit protein uL30 from Corynebacterium glutamicum (strain ATCC 13032 / DSM 20300 / JCM 1318 / BCRC 11384 / CCUG 27702 / LMG 3730 / NBRC 12168 / NCIMB 10025 / NRRL B-2784 / 534).